We begin with the raw amino-acid sequence, 50 residues long: Insulin (50 aa).

3 disulfides stabilise this stretch: Cys7/Cys36, Cys19/Cys49, and Cys35/Cys40.

The protein belongs to the insulin family. In terms of assembly, heterodimer of a B chain and an A chain linked by two disulfide bonds.

The protein resides in the secreted. Its function is as follows. Insulin decreases blood glucose concentration. It increases cell permeability to monosaccharides, amino acids and fatty acids. It accelerates glycolysis, the pentose phosphate cycle, and glycogen synthesis in liver. The polypeptide is Insulin (ins) (Katsuwonus pelamis (Skipjack tuna)).